A 786-amino-acid chain; its full sequence is MGSTETRHPPAMFDWFFEAGCPNSLEEDPPILRQFPPDFQEQEAMQMVPRFCFPFDIEREPPSPAVQHFTFALTDLVGNRRFGFCRLRAGARSCLCILSHFPWFEVFYKILNNVGDLLAQNQVAEAEELLQNLQQHPLLGPRFSGRSEMDSSITVRSECGILPPALGNSKLLSCFVAPDAASLPSIPENRNLTELVVAVTDENIVGLFAALLAERRVLLTASKLSTLTACVHASCALLYPMRWEHVLIPTLPPHLLDYCCAPMPYLIGVHGSLAERVREKALEDVVVLNADSNTLETPFDDVQALPPDVVSLLRLRLRKVALSPGEGVSRLFLKVQALLFGGYRDALVCIPGQPVTFSEEAFLAQKPGAPLQAFHKKAVHLQLFKQFIESRLEKLNAGEGFSDQFEQEIIACRGASSGTLRSYQLWVDSLKKGSDALLHSMKTKTQPAVRNMYRSGDSLQEYCASKAKSGLKGMQNLLTIKDGDSGLQRGGSLRTPSLTSRSDRLQQRLPISQHFGQNRPLRPSRRLKTEEGPSEPLRERSPTLSPGDTQNPWAEDTLDGSFLGSGEELDLLSEILDSLNVETKSGDLQRASQSLDCCQRGAASESCSSLPDIPVGLPWQLEEDKRSQDPQPWSLPGDLSLLQDTPFSEVVSYSKNSCSQPFQQSPPSQGDPGPSLSKLDPRPSQSPCPKLLRVPTRHSPPESPQLLVSTEPNSDAVQRLQSISSPSCSHSAENPRNQPPQVLLGQACVQPLEELGAPTYVSHVSTQQRPQDKQPRVADLKKCFEN.

A uDENN domain is found at 13 to 158 (FDWFFEAGCP…MDSSITVRSE (146 aa)). The cDENN domain occupies 182–318 (SLPSIPENRN…VVSLLRLRLR (137 aa)). In terms of domain architecture, dDENN spans 320-398 (VALSPGEGVS…ESRLEKLNAG (79 aa)). Positions 401–405 (FSDQF) match the FXDXF motif motif. The segment at 481–553 (KDGDSGLQRG…LSPGDTQNPW (73 aa)) is disordered. The segment covering 527–541 (LKTEEGPSEPLRERS) has biased composition (basic and acidic residues). A compositionally biased stretch (polar residues) spans 542–552 (PTLSPGDTQNP). Ser-565 carries the phosphoserine modification. The short motif at 570 to 579 (DLLSEILDSL) is the Clathrin box element. Disordered stretches follow at residues 653–741 (YSKN…QPPQ) and 762–786 (SHVSTQQRPQDKQPRVADLKKCFEN). A compositionally biased stretch (low complexity) spans 657-675 (SCSQPFQQSPPSQGDPGPS). Residues 706-740 (LLVSTEPNSDAVQRLQSISSPSCSHSAENPRNQPP) are compositionally biased toward polar residues. A compositionally biased stretch (basic and acidic residues) spans 770 to 786 (PQDKQPRVADLKKCFEN).

Exhibits low nucleotide-independent RAB35-binding activity. Interacts with clathrin heavy chain/CLTC and with AP2A2, but not with AP2B1.

Its subcellular location is the cytoplasm. It localises to the cytosol. It is found in the cytoplasmic vesicle. The protein resides in the clathrin-coated vesicle. In terms of biological role, guanine nucleotide exchange factor (GEF) which may activate RAB8A, RAB13 and RAB35. Promotes the exchange of GDP to GTP, converting inactive GDP-bound Rab proteins into their active GTP-bound form. The sequence is that of DENN domain-containing protein 1C (Dennd1c) from Mus musculus (Mouse).